The primary structure comprises 208 residues: Ribosomal RNA large subunit methyltransferase E (208 aa).

S-adenosyl-L-methionine-binding residues include Gly62, Trp64, Asp82, Asp98, and Asp123. Lys163 (proton acceptor) is an active-site residue.

This sequence belongs to the class I-like SAM-binding methyltransferase superfamily. RNA methyltransferase RlmE family.

It is found in the cytoplasm. It carries out the reaction uridine(2552) in 23S rRNA + S-adenosyl-L-methionine = 2'-O-methyluridine(2552) in 23S rRNA + S-adenosyl-L-homocysteine + H(+). Functionally, specifically methylates the uridine in position 2552 of 23S rRNA at the 2'-O position of the ribose in the fully assembled 50S ribosomal subunit. The protein is Ribosomal RNA large subunit methyltransferase E of Actinobacillus succinogenes (strain ATCC 55618 / DSM 22257 / CCUG 43843 / 130Z).